Reading from the N-terminus, the 99-residue chain is UPF0751 protein BAMEG_A0107 (99 aa).

The protein belongs to the UPF0751 family.

In Bacillus anthracis (strain CDC 684 / NRRL 3495), this protein is UPF0751 protein BAMEG_A0107.